Reading from the N-terminus, the 358-residue chain is Gibberellin 3-beta-dioxygenase 1 (358 aa).

One can recognise a Fe2OG dioxygenase domain in the interval 204–308 (DLNWAQAALQ…RLSVAFLWGP (105 aa)). His-232, Asp-234, and His-289 together coordinate Fe cation. Arg-299 is an active-site residue.

Belongs to the iron/ascorbate-dependent oxidoreductase family. GA3OX subfamily. The cofactor is L-ascorbate. It depends on Fe cation as a cofactor. As to expression, expressed in stems, roots, leaves, flowers, and siliques. Highly expressed near the nodes in stems and in the stamen filaments of flowers. Detected in developing cotyledons, vegetative shoot apical meristem and non-meristematic, non-elongation regions of the roots. Found in the cortex and the endodermis of the embryo axis in germinating seeds and in the placenta in developing siliques.

It catalyses the reaction gibberellin A9 + 2-oxoglutarate + O2 = gibberellin A4 + succinate + CO2. The enzyme catalyses gibberellin A20 + 2-oxoglutarate + O2 = gibberellin A1 + succinate + CO2. It participates in plant hormone biosynthesis; gibberellin biosynthesis. Converts the inactive gibberellin (GA) precursors GA9 and GA20 into the bioactives gibberellins GA4 and GA1, respectively. Involved in the production of bioactive GA for vegetative growth and development. The chain is Gibberellin 3-beta-dioxygenase 1 (GA3OX1) from Arabidopsis thaliana (Mouse-ear cress).